The sequence spans 608 residues: Elongation factor 4 (608 aa).

The tr-type G domain maps to 11–193 (KKIRNFSIIA…QIVEKVPEPS (183 aa)). Residues 23-28 (DHGKST) and 140-143 (NKID) contribute to the GTP site.

The protein belongs to the TRAFAC class translation factor GTPase superfamily. Classic translation factor GTPase family. LepA subfamily.

Its subcellular location is the cell membrane. It catalyses the reaction GTP + H2O = GDP + phosphate + H(+). Required for accurate and efficient protein synthesis under certain stress conditions. May act as a fidelity factor of the translation reaction, by catalyzing a one-codon backward translocation of tRNAs on improperly translocated ribosomes. Back-translocation proceeds from a post-translocation (POST) complex to a pre-translocation (PRE) complex, thus giving elongation factor G a second chance to translocate the tRNAs correctly. Binds to ribosomes in a GTP-dependent manner. The sequence is that of Elongation factor 4 from Listeria monocytogenes serotype 4b (strain CLIP80459).